We begin with the raw amino-acid sequence, 744 residues long: Adenosylcobalamin-dependent ribonucleoside-triphosphate reductase (744 aa).

The cysteines at positions 120 and 424 are disulfide-linked. Residues 148–159 (SMPFSFLFDQLM) form an effector region-1 region. The segment at 169–318 (VDENINQIPK…ICNLIGKTVV (150 aa)) is effector region-2. Catalysis depends on residues Cys-413 and Glu-415. The adenosylcobalamin-binding-1 stretch occupies residues 570-631 (FHYSGYLIQR…SDNFASAGTV (62 aa)). The adenosylcobalamin-binding-2 stretch occupies residues 690–729 (LKQAPKEPISKEKYEKADNHITGNVEIVFEQTNEDQKGLE).

It belongs to the class II ribonucleoside-triphosphate reductase family. Monomer. Adenosylcob(III)alamin is required as a cofactor.

It carries out the reaction a 2'-deoxyribonucleoside 5'-triphosphate + [thioredoxin]-disulfide + H2O = a ribonucleoside 5'-triphosphate + [thioredoxin]-dithiol. With respect to regulation, allosterically regulated by ATP and dNTP. This is Adenosylcobalamin-dependent ribonucleoside-triphosphate reductase (rtpR) from Lactobacillus gasseri (strain ATCC 33323 / DSM 20243 / BCRC 14619 / CIP 102991 / JCM 1131 / KCTC 3163 / NCIMB 11718 / NCTC 13722 / AM63).